Here is a 119-residue protein sequence, read N- to C-terminus: Large ribosomal subunit protein bL20 (119 aa).

Belongs to the bacterial ribosomal protein bL20 family.

Functionally, binds directly to 23S ribosomal RNA and is necessary for the in vitro assembly process of the 50S ribosomal subunit. It is not involved in the protein synthesizing functions of that subunit. This is Large ribosomal subunit protein bL20 from Levilactobacillus brevis (strain ATCC 367 / BCRC 12310 / CIP 105137 / JCM 1170 / LMG 11437 / NCIMB 947 / NCTC 947) (Lactobacillus brevis).